Here is a 234-residue protein sequence, read N- to C-terminus: Superoxide dismutase [Mn], mitochondrial (234 aa).

The N-terminal 34 residues, 1–34, are a transit peptide targeting the mitochondrion; the sequence is MFSIRSSSRVLLKASSATTRATLNAAASKTFTRS. Residues H60, H108, D198, and H202 each contribute to the Mn(2+) site.

Belongs to the iron/manganese superoxide dismutase family. Homotetramer. Requires Mn(2+) as cofactor.

The protein resides in the mitochondrion matrix. It carries out the reaction 2 superoxide + 2 H(+) = H2O2 + O2. Functionally, destroys superoxide anion radicals which are normally produced within the cells and which are toxic to biological systems. This is Superoxide dismutase [Mn], mitochondrial (SOD2) from Candida albicans (Yeast).